Here is a 479-residue protein sequence, read N- to C-terminus: Trigger factor (479 aa).

Residues 174 to 261 (GDIAVVSFSG…LKELKTRELP (88 aa)) enclose the PPIase FKBP-type domain. The tract at residues 437-479 (KVLESEAKTSKPAAKSKGSKTKSTKTKTNKAKTEKPASDKTKS) is disordered. The span at 453 to 466 (KGSKTKSTKTKTNK) shows a compositional bias: basic residues. Residues 467–479 (AKTEKPASDKTKS) are compositionally biased toward basic and acidic residues.

Belongs to the FKBP-type PPIase family. Tig subfamily.

The protein localises to the cytoplasm. It carries out the reaction [protein]-peptidylproline (omega=180) = [protein]-peptidylproline (omega=0). In terms of biological role, involved in protein export. Acts as a chaperone by maintaining the newly synthesized protein in an open conformation. Functions as a peptidyl-prolyl cis-trans isomerase. In Prochlorococcus marinus (strain MIT 9303), this protein is Trigger factor.